A 124-amino-acid chain; its full sequence is MQGLEYTLEPEQAKKCKTHQLVDLAKIDLNSWSQENVRPKTLLGRTSKKRLTSQFWYEFTKKQKLKNALYYFVIYDITDNSILPVETLNQKNPLSTSFPFPFGRPLRGINFSGSCLHCLLRVLK.

It is found in the plastid. The protein resides in the chloroplast. This is an uncharacterized protein from Chlamydomonas reinhardtii (Chlamydomonas smithii).